The chain runs to 662 residues: Probable dolichyl-phosphate-mannose--protein mannosyltransferase 7 (662 aa).

Residues 1 to 26 (MKDLRLQGPYRKYIPYNIFQQCGIGH) lie on the Lumenal side of the membrane. Residues 27–47 (LKTLDYIFAFLIVITNFTLIW) form a helical membrane-spanning segment. The Cytoplasmic segment spans residues 48–159 (KSHSSSFWNR…GTIISFDSLE (112 aa)). Residues 160–180 (WCLFSVVIYSFISISIAKLGT) form a helical membrane-spanning segment. The Lumenal portion of the chain corresponds to 181 to 195 (TNWFANVITLSISLG). The chain crosses the membrane as a helical span at residues 196-216 (LAISSKFIGIVTWAFVILSFV). At 217–235 (RQFDRLISDVKVTTIQIIK) the chain is on the cytoplasmic side. Residues 236 to 256 (FVILCLLFVLIIPGSIFIISY) traverse the membrane as a helical segment. The Lumenal portion of the chain corresponds to 257–482 (SNLLSNFKTD…MEYPVIPRTT (226 aa)). The region spanning 289-344 (PSRLYYGSTITLRHLDSMVGYLASHDISYPSDVDEQLVALSFEEFAADNEWLIEHP) is the MIR 1 domain. Asn-347 carries N-linked (GlcNAc...) asparagine glycosylation. MIR domains follow at residues 359 to 418 (LIPV…VLLI) and 432 to 488 (DKYI…IDSV). A helical membrane pass occupies residues 483 to 503 (FLIDSVQLPVDFQVPMIEYYI). The Cytoplasmic segment spans residues 504–565 (GKISSSAEFN…KWPITLDTDS (62 aa)). The helical transmembrane segment at 566-586 (PVWFNFAWYGSLLSMIIFMCV) threads the bilayer. The Lumenal portion of the chain corresponds to 587–617 (QCKRMISWNPWTTAEPSFSIKWEVYNEFGWE). Residues 618 to 638 (CIVGWFLHFYIFTMSPHFNLG) traverse the membrane as a helical segment. The Cytoplasmic segment spans residues 639 to 662 (KKLYFQSFFFSVLCLLESLDCLAK).

This sequence belongs to the glycosyltransferase 39 family.

The protein resides in the endoplasmic reticulum membrane. The enzyme catalyses a di-trans,poly-cis-dolichyl beta-D-mannosyl phosphate + L-seryl-[protein] = 3-O-(alpha-D-mannosyl)-L-seryl-[protein] + a di-trans,poly-cis-dolichyl phosphate + H(+). It carries out the reaction a di-trans,poly-cis-dolichyl beta-D-mannosyl phosphate + L-threonyl-[protein] = 3-O-(alpha-D-mannosyl)-L-threonyl-[protein] + a di-trans,poly-cis-dolichyl phosphate + H(+). It functions in the pathway protein modification; protein glycosylation. Functionally, probable protein O-mannosyltransferase involved in O-glycosylation which is essential for cell wall rigidity. Transfers mannose from Dol-P-mannose to Ser or Thr residues on proteins. The protein is Probable dolichyl-phosphate-mannose--protein mannosyltransferase 7 of Saccharomyces cerevisiae (strain ATCC 204508 / S288c) (Baker's yeast).